Reading from the N-terminus, the 85-residue chain is uncharacterized protein (85 aa).

Transmembrane regions (helical) follow at residues 20-42 and 52-69; these read IYWF…TTFL and IILR…KHYY.

Its subcellular location is the membrane. This is an uncharacterized protein from Saccharomyces cerevisiae (strain ATCC 204508 / S288c) (Baker's yeast).